The chain runs to 94 residues: Cell division topological specificity factor (94 aa).

The protein belongs to the MinE family.

Its function is as follows. Prevents the cell division inhibition by proteins MinC and MinD at internal division sites while permitting inhibition at polar sites. This ensures cell division at the proper site by restricting the formation of a division septum at the midpoint of the long axis of the cell. This is Cell division topological specificity factor from Acetivibrio thermocellus (strain ATCC 27405 / DSM 1237 / JCM 9322 / NBRC 103400 / NCIMB 10682 / NRRL B-4536 / VPI 7372) (Clostridium thermocellum).